A 225-amino-acid chain; its full sequence is NAD(P)H-quinone oxidoreductase subunit K, chloroplastic (225 aa).

[4Fe-4S] cluster contacts are provided by Cys-43, Cys-44, Cys-108, and Cys-139.

It belongs to the complex I 20 kDa subunit family. In terms of assembly, NDH is composed of at least 16 different subunits, 5 of which are encoded in the nucleus. [4Fe-4S] cluster is required as a cofactor.

The protein localises to the plastid. Its subcellular location is the chloroplast thylakoid membrane. The catalysed reaction is a plastoquinone + NADH + (n+1) H(+)(in) = a plastoquinol + NAD(+) + n H(+)(out). The enzyme catalyses a plastoquinone + NADPH + (n+1) H(+)(in) = a plastoquinol + NADP(+) + n H(+)(out). NDH shuttles electrons from NAD(P)H:plastoquinone, via FMN and iron-sulfur (Fe-S) centers, to quinones in the photosynthetic chain and possibly in a chloroplast respiratory chain. The immediate electron acceptor for the enzyme in this species is believed to be plastoquinone. Couples the redox reaction to proton translocation, and thus conserves the redox energy in a proton gradient. This is NAD(P)H-quinone oxidoreductase subunit K, chloroplastic from Solanum bulbocastanum (Wild potato).